Consider the following 840-residue polypeptide: DNA gyrase subunit A (840 aa).

One can recognise a Topo IIA-type catalytic domain in the interval 51–516 (LPDVRDGFKP…VSSHIDDEDL (466 aa)). The active-site O-(5'-phospho-DNA)-tyrosine intermediate is tyrosine 139. The GyrA-box signature appears at 543 to 549 (QRRGGVG).

It belongs to the type II topoisomerase GyrA/ParC subunit family. In terms of assembly, heterotetramer, composed of two GyrA and two GyrB chains. In the heterotetramer, GyrA contains the active site tyrosine that forms a transient covalent intermediate with DNA, while GyrB binds cofactors and catalyzes ATP hydrolysis.

The protein resides in the cytoplasm. The enzyme catalyses ATP-dependent breakage, passage and rejoining of double-stranded DNA.. A type II topoisomerase that negatively supercoils closed circular double-stranded (ds) DNA in an ATP-dependent manner to modulate DNA topology and maintain chromosomes in an underwound state. Negative supercoiling favors strand separation, and DNA replication, transcription, recombination and repair, all of which involve strand separation. Also able to catalyze the interconversion of other topological isomers of dsDNA rings, including catenanes and knotted rings. Type II topoisomerases break and join 2 DNA strands simultaneously in an ATP-dependent manner. The polypeptide is DNA gyrase subunit A (Ureaplasma parvum serovar 3 (strain ATCC 700970)).